A 115-amino-acid polypeptide reads, in one-letter code: Holo-[acyl-carrier-protein] synthase (115 aa).

Mg(2+) is bound by residues Asp-6 and Glu-51.

It belongs to the P-Pant transferase superfamily. AcpS family. Mg(2+) is required as a cofactor.

Its subcellular location is the cytoplasm. The catalysed reaction is apo-[ACP] + CoA = holo-[ACP] + adenosine 3',5'-bisphosphate + H(+). Its function is as follows. Transfers the 4'-phosphopantetheine moiety from coenzyme A to a Ser of acyl-carrier-protein. This Campylobacter jejuni subsp. jejuni serotype O:6 (strain 81116 / NCTC 11828) protein is Holo-[acyl-carrier-protein] synthase.